A 309-amino-acid chain; its full sequence is Porphobilinogen deaminase (309 aa).

Residue C241 is modified to S-(dipyrrolylmethanemethyl)cysteine.

Belongs to the HMBS family. In terms of assembly, monomer. It depends on dipyrromethane as a cofactor.

It carries out the reaction 4 porphobilinogen + H2O = hydroxymethylbilane + 4 NH4(+). It participates in porphyrin-containing compound metabolism; protoporphyrin-IX biosynthesis; coproporphyrinogen-III from 5-aminolevulinate: step 2/4. Its function is as follows. Tetrapolymerization of the monopyrrole PBG into the hydroxymethylbilane pre-uroporphyrinogen in several discrete steps. This chain is Porphobilinogen deaminase, found in Bacillus cereus (strain ZK / E33L).